Reading from the N-terminus, the 430-residue chain is Phosphoglucosamine mutase (430 aa).

The active-site Phosphoserine intermediate is the Ser-93. Mg(2+) contacts are provided by Ser-93, Asp-227, Asp-229, and Asp-231. Ser-93 bears the Phosphoserine mark.

Belongs to the phosphohexose mutase family. The cofactor is Mg(2+). In terms of processing, activated by phosphorylation.

The catalysed reaction is alpha-D-glucosamine 1-phosphate = D-glucosamine 6-phosphate. Catalyzes the conversion of glucosamine-6-phosphate to glucosamine-1-phosphate. The polypeptide is Phosphoglucosamine mutase (Thermosipho africanus (strain TCF52B)).